The chain runs to 642 residues: Threonine--tRNA ligase (642 aa).

Residues methionine 1–serine 61 form the TGS domain. The tract at residues aspartate 243 to proline 534 is catalytic. Zn(2+) is bound by residues cysteine 334, histidine 385, and histidine 511.

This sequence belongs to the class-II aminoacyl-tRNA synthetase family. Homodimer. Zn(2+) is required as a cofactor.

The protein resides in the cytoplasm. It catalyses the reaction tRNA(Thr) + L-threonine + ATP = L-threonyl-tRNA(Thr) + AMP + diphosphate + H(+). Catalyzes the attachment of threonine to tRNA(Thr) in a two-step reaction: L-threonine is first activated by ATP to form Thr-AMP and then transferred to the acceptor end of tRNA(Thr). Also edits incorrectly charged L-seryl-tRNA(Thr). The protein is Threonine--tRNA ligase of Buchnera aphidicola subsp. Schizaphis graminum (strain Sg).